Reading from the N-terminus, the 316-residue chain is Thymidylate synthase (316 aa).

DUMP contacts are provided by residues arginine 23 and 178-179; that span reads RR. Cysteine 198 functions as the Nucleophile in the catalytic mechanism. DUMP contacts are provided by residues 218–221, asparagine 229, and 259–261; these read RSAD and HLY. A (6R)-5,10-methylene-5,6,7,8-tetrahydrofolate-binding site is contributed by aspartate 221. Residue alanine 315 participates in (6R)-5,10-methylene-5,6,7,8-tetrahydrofolate binding.

This sequence belongs to the thymidylate synthase family. Bacterial-type ThyA subfamily. Homodimer.

It is found in the cytoplasm. The enzyme catalyses dUMP + (6R)-5,10-methylene-5,6,7,8-tetrahydrofolate = 7,8-dihydrofolate + dTMP. The protein operates within pyrimidine metabolism; dTTP biosynthesis. Catalyzes the reductive methylation of 2'-deoxyuridine-5'-monophosphate (dUMP) to 2'-deoxythymidine-5'-monophosphate (dTMP) while utilizing 5,10-methylenetetrahydrofolate (mTHF) as the methyl donor and reductant in the reaction, yielding dihydrofolate (DHF) as a by-product. This enzymatic reaction provides an intracellular de novo source of dTMP, an essential precursor for DNA biosynthesis. The chain is Thymidylate synthase from Lacticaseibacillus casei (Lactobacillus casei).